Consider the following 179-residue polypeptide: Large ribosomal subunit protein uL6 (179 aa).

This sequence belongs to the universal ribosomal protein uL6 family. Part of the 50S ribosomal subunit.

Functionally, this protein binds to the 23S rRNA, and is important in its secondary structure. It is located near the subunit interface in the base of the L7/L12 stalk, and near the tRNA binding site of the peptidyltransferase center. In Akkermansia muciniphila (strain ATCC BAA-835 / DSM 22959 / JCM 33894 / BCRC 81048 / CCUG 64013 / CIP 107961 / Muc), this protein is Large ribosomal subunit protein uL6.